The following is a 194-amino-acid chain: Putative manganese efflux pump MntP (194 aa).

A run of 6 helical transmembrane segments spans residues 2–22, 43–63, 67–87, 111–131, 137–157, and 174–194; these read ISII…AFAV, LWFG…ASTF, VTQF…GNMV, PLAV…AFMF, AFAI…GLHI, and GVVL…VIAF.

This sequence belongs to the MntP (TC 9.B.29) family.

The protein resides in the cell membrane. Its function is as follows. Probably functions as a manganese efflux pump. This is Putative manganese efflux pump MntP from Bifidobacterium longum (strain DJO10A).